Here is a 314-residue protein sequence, read N- to C-terminus: Type II methyltransferase M.HpaI (314 aa).

The protein belongs to the N(4)/N(6)-methyltransferase family.

It carries out the reaction a 2'-deoxyadenosine in DNA + S-adenosyl-L-methionine = an N(6)-methyl-2'-deoxyadenosine in DNA + S-adenosyl-L-homocysteine + H(+). A beta subtype methylase that recognizes the double-stranded sequence 5'-GTTAAC-3', methylates A-5 on both strands, and protects the DNA from cleavage by the HpaI endonuclease. In Haemophilus parainfluenzae, this protein is Type II methyltransferase M.HpaI (hpaIM).